A 116-amino-acid polypeptide reads, in one-letter code: Selenoprotein H (116 aa).

Lys20 is modified (N6-acetyllysine). The cysteinyl-selenocysteine (Cys-Sec); redox-active cross-link spans 35–38 (CTSU). A non-standard amino acid (selenocysteine) is located at residue Sec38.

It belongs to the SelWTH family.

Its function is as follows. May be involved in a redox-related process. This chain is Selenoprotein H, found in Mus musculus (Mouse).